The sequence spans 563 residues: Arginine--tRNA ligase (563 aa).

The 'HIGH' region signature appears at 122 to 132 (PNIAKPMSMGH).

It belongs to the class-I aminoacyl-tRNA synthetase family. In terms of assembly, monomer.

The protein resides in the cytoplasm. The enzyme catalyses tRNA(Arg) + L-arginine + ATP = L-arginyl-tRNA(Arg) + AMP + diphosphate. In Ligilactobacillus salivarius (strain UCC118) (Lactobacillus salivarius), this protein is Arginine--tRNA ligase.